Consider the following 525-residue polypeptide: 2,3-bisphosphoglycerate-independent phosphoglycerate mutase (525 aa).

D15 and S65 together coordinate Mn(2+). S65 acts as the Phosphoserine intermediate in catalysis. Residues H126, 156–157 (RD), R188, R194, 258–261 (RPDR), and K331 contribute to the substrate site. Mn(2+) contacts are provided by D398, H402, D439, H440, and H457.

It belongs to the BPG-independent phosphoglycerate mutase family. As to quaternary structure, monomer. Mn(2+) is required as a cofactor.

It carries out the reaction (2R)-2-phosphoglycerate = (2R)-3-phosphoglycerate. It participates in carbohydrate degradation; glycolysis; pyruvate from D-glyceraldehyde 3-phosphate: step 3/5. Its function is as follows. Catalyzes the interconversion of 2-phosphoglycerate and 3-phosphoglycerate. The polypeptide is 2,3-bisphosphoglycerate-independent phosphoglycerate mutase (Picosynechococcus sp. (strain ATCC 27264 / PCC 7002 / PR-6) (Agmenellum quadruplicatum)).